Reading from the N-terminus, the 169-residue chain is Peptide methionine sulfoxide reductase MsrA (169 aa).

Residue Cys-10 is part of the active site.

This sequence belongs to the MsrA Met sulfoxide reductase family.

It catalyses the reaction L-methionyl-[protein] + [thioredoxin]-disulfide + H2O = L-methionyl-(S)-S-oxide-[protein] + [thioredoxin]-dithiol. The enzyme catalyses [thioredoxin]-disulfide + L-methionine + H2O = L-methionine (S)-S-oxide + [thioredoxin]-dithiol. Has an important function as a repair enzyme for proteins that have been inactivated by oxidation. Catalyzes the reversible oxidation-reduction of methionine sulfoxide in proteins to methionine. The sequence is that of Peptide methionine sulfoxide reductase MsrA from Streptococcus agalactiae serotype III (strain NEM316).